Consider the following 248-residue polypeptide: Probable transcriptional regulatory protein Plav_2114 (248 aa).

Belongs to the TACO1 family.

Its subcellular location is the cytoplasm. This Parvibaculum lavamentivorans (strain DS-1 / DSM 13023 / NCIMB 13966) protein is Probable transcriptional regulatory protein Plav_2114.